Here is a 206-residue protein sequence, read N- to C-terminus: Small ribosomal subunit protein uS4 (206 aa).

One can recognise an S4 RNA-binding domain in the interval 96–156; it reads GRLDNVVYRM…EKSKKQARIK (61 aa).

Belongs to the universal ribosomal protein uS4 family. Part of the 30S ribosomal subunit. Contacts protein S5. The interaction surface between S4 and S5 is involved in control of translational fidelity.

Functionally, one of the primary rRNA binding proteins, it binds directly to 16S rRNA where it nucleates assembly of the body of the 30S subunit. With S5 and S12 plays an important role in translational accuracy. This is Small ribosomal subunit protein uS4 from Mannheimia succiniciproducens (strain KCTC 0769BP / MBEL55E).